Reading from the N-terminus, the 57-residue chain is Small nuclear protein PRAC1 (57 aa).

The segment at 38–57 (RSDGSACNSGISGGRGRKIP) is disordered.

Highly expressed in prostate, rectum, and distal colon, and weakly expressed in bladder. Expressed in prostate cancer cell lines.

The protein localises to the nucleus. The protein is Small nuclear protein PRAC1 (PRAC1) of Homo sapiens (Human).